The sequence spans 636 residues: Phosphomethylpyrimidine synthase (636 aa).

A disordered region spans residues D48–P70. Residues N231, M260, Y289, H325, S345–G347, D386–R389, and E425 contribute to the substrate site. H429 is a binding site for Zn(2+). Residue Y452 coordinates substrate. Residue H493 coordinates Zn(2+). C573, C576, and C581 together coordinate [4Fe-4S] cluster.

It belongs to the ThiC family. Homodimer. The cofactor is [4Fe-4S] cluster.

It carries out the reaction 5-amino-1-(5-phospho-beta-D-ribosyl)imidazole + S-adenosyl-L-methionine = 4-amino-2-methyl-5-(phosphooxymethyl)pyrimidine + CO + 5'-deoxyadenosine + formate + L-methionine + 3 H(+). Its pathway is cofactor biosynthesis; thiamine diphosphate biosynthesis. Catalyzes the synthesis of the hydroxymethylpyrimidine phosphate (HMP-P) moiety of thiamine from aminoimidazole ribotide (AIR) in a radical S-adenosyl-L-methionine (SAM)-dependent reaction. The protein is Phosphomethylpyrimidine synthase of Cellvibrio japonicus (strain Ueda107) (Pseudomonas fluorescens subsp. cellulosa).